The primary structure comprises 960 residues: UPF0182 protein DSY1630 (960 aa).

The next 7 membrane-spanning stretches (helical) occupy residues 7-27 (IMLV…GLFE), 50-70 (IIQI…LFSI), 105-125 (TLWL…VTGF), 169-189 (FGPL…AGVI), 212-232 (LALL…FDTF), 256-276 (ALKA…LAFF), and 285-305 (LPIL…PMVL). Disordered regions lie at residues 866–899 (SALA…QEDT) and 924–960 (TGDS…KTNP). Acidic residues predominate over residues 881–897 (ETEETTEETEEPVDPQE). Over residues 931-944 (EGGKKADEDAHDVQ) the composition is skewed to basic and acidic residues. Over residues 950–960 (SVSSEQSKTNP) the composition is skewed to polar residues.

Belongs to the UPF0182 family.

The protein localises to the cell membrane. This Desulfitobacterium hafniense (strain Y51) protein is UPF0182 protein DSY1630.